Reading from the N-terminus, the 160-residue chain is Cytochrome b6-f complex subunit 4 (160 aa).

A run of 3 helical transmembrane segments spans residues 36-56 (LLYIFPVVILGTIACIVGLAV), 95-115 (LLGIALQTLVPLGLMLVPFIE), and 131-151 (TVFLFGTVTTIYLGIGAALPI).

It belongs to the cytochrome b family. PetD subfamily. In terms of assembly, the 4 large subunits of the cytochrome b6-f complex are cytochrome b6, subunit IV (17 kDa polypeptide, PetD), cytochrome f and the Rieske protein, while the 4 small subunits are PetG, PetL, PetM and PetN. The complex functions as a dimer.

It is found in the cellular thylakoid membrane. Its function is as follows. Component of the cytochrome b6-f complex, which mediates electron transfer between photosystem II (PSII) and photosystem I (PSI), cyclic electron flow around PSI, and state transitions. The sequence is that of Cytochrome b6-f complex subunit 4 from Parasynechococcus marenigrum (strain WH8102).